A 581-amino-acid chain; its full sequence is Meiotic PUF family protein 1 (581 aa).

The 356-residue stretch at 225–580 (FPNGTTEPFE…RIAALVEKSK (356 aa)) folds into the PUM-HD domain. Pumilio repeat units lie at residues 291–326 (TILP…SFSY), 327–362 (FLKK…NLIE), 363–398 (ELIE…GIFD), 403–438 (KMQG…TCLD), 439–474 (EIIN…RILN), 475–510 (SLLK…RYVK), 518–554 (ELPT…LMAE), and 555–581 (HLKK…KSKS).

Functionally, RNA-binding protein essential for meiotic progression. This Schizosaccharomyces pombe (strain 972 / ATCC 24843) (Fission yeast) protein is Meiotic PUF family protein 1 (mpf1).